Reading from the N-terminus, the 226-residue chain is ATP-dependent dethiobiotin synthetase BioD (226 aa).

Aspartate 13–leucine 18 is a binding site for ATP. Position 17 (threonine 17) interacts with Mg(2+). Lysine 38 is a catalytic residue. Residues aspartate 55, glutamate 117 to glycine 120, asparagine 177 to arginine 178, proline 206 to valine 208, and glutamate 213 each bind ATP. Mg(2+) is bound by residues aspartate 55 and glutamate 117.

It belongs to the dethiobiotin synthetase family. In terms of assembly, homodimer. The cofactor is Mg(2+).

It is found in the cytoplasm. The enzyme catalyses (7R,8S)-7,8-diammoniononanoate + CO2 + ATP = (4R,5S)-dethiobiotin + ADP + phosphate + 3 H(+). It functions in the pathway cofactor biosynthesis; biotin biosynthesis; biotin from 7,8-diaminononanoate: step 1/2. In terms of biological role, catalyzes a mechanistically unusual reaction, the ATP-dependent insertion of CO2 between the N7 and N8 nitrogen atoms of 7,8-diaminopelargonic acid (DAPA, also called 7,8-diammoniononanoate) to form a ureido ring. In Aeromonas salmonicida (strain A449), this protein is ATP-dependent dethiobiotin synthetase BioD.